Consider the following 238-residue polypeptide: Polynucleotide 3'-phosphatase (238 aa).

This sequence belongs to the DNA 3' phosphatase family.

Its subcellular location is the nucleus. It carries out the reaction a 3'end (2'-deoxyribonucleotide 3'-phosphate)-DNA + H2O = a 3'-end 2'-deoxyribonucleotide-DNA + phosphate. Its function is as follows. Dephosphorylate DNA's 3'-phosphate termini. Has a role in the repair of breaks in single-stranded DNA. The sequence is that of Polynucleotide 3'-phosphatase (TPP1) from Saccharomyces cerevisiae (strain ATCC 204508 / S288c) (Baker's yeast).